Reading from the N-terminus, the 286-residue chain is Energy-coupling factor transporter ATP-binding protein EcfA2 (286 aa).

Residues 3–246 (IRFDNVSYTY…KEKLADWHIA (244 aa)) form the ABC transporter domain. 40 to 47 (GQTGSGKS) provides a ligand contact to ATP.

Belongs to the ABC transporter superfamily. Energy-coupling factor EcfA family. Forms a stable energy-coupling factor (ECF) transporter complex composed of 2 membrane-embedded substrate-binding proteins (S component), 2 ATP-binding proteins (A component) and 2 transmembrane proteins (T component).

Its subcellular location is the cell membrane. Functionally, ATP-binding (A) component of a common energy-coupling factor (ECF) ABC-transporter complex. Unlike classic ABC transporters this ECF transporter provides the energy necessary to transport a number of different substrates. This is Energy-coupling factor transporter ATP-binding protein EcfA2 from Staphylococcus aureus (strain bovine RF122 / ET3-1).